The following is a 303-amino-acid chain: Elongation factor Ts (303 aa).

Residues 79–82 form an involved in Mg(2+) ion dislocation from EF-Tu region; the sequence is TDFT.

This sequence belongs to the EF-Ts family.

The protein resides in the cytoplasm. In terms of biological role, associates with the EF-Tu.GDP complex and induces the exchange of GDP to GTP. It remains bound to the aminoacyl-tRNA.EF-Tu.GTP complex up to the GTP hydrolysis stage on the ribosome. In Magnetococcus marinus (strain ATCC BAA-1437 / JCM 17883 / MC-1), this protein is Elongation factor Ts.